The following is a 1171-amino-acid chain: ATP-dependent helicase/deoxyribonuclease subunit B (1171 aa).

Positions 1-343 (MSLRFVIGRA…LVADENYRYR (343 aa)) constitute a UvrD-like helicase ATP-binding domain. 8 to 15 (GRAGSGKS) contacts ATP. One can recognise a UvrD-like helicase C-terminal domain in the interval 281–587 (MEQPRFHSPA…QFANIPPSLD (307 aa)). [4Fe-4S] cluster contacts are provided by Cys805, Cys1129, Cys1132, and Cys1138.

This sequence belongs to the helicase family. AddB/RexB type 1 subfamily. In terms of assembly, heterodimer of AddA and AddB. Mg(2+) serves as cofactor. It depends on [4Fe-4S] cluster as a cofactor.

Its function is as follows. The heterodimer acts as both an ATP-dependent DNA helicase and an ATP-dependent, dual-direction single-stranded exonuclease. Recognizes the chi site generating a DNA molecule suitable for the initiation of homologous recombination. The AddB subunit has 5' -&gt; 3' nuclease activity but not helicase activity. The chain is ATP-dependent helicase/deoxyribonuclease subunit B from Bacillus cereus (strain AH187).